The primary structure comprises 286 residues: MVDLPKFTMRDLVECGVHFGHKTSRWNPKMAPYIYGVHNDIHIINLQSTVFLLKNALSALYDIVLKRGRVLFIGTKVQASAIIADEATRCGQYYINNRWLGGMLTNWETISLSIKKLREYEKLLQNVDNQFTKKELLLFEKKRAKLDRSIGGICNMGGLPHVIFVIDTNKERIAIREANKLNIPVIAVLDTNSDPTGIDYPIPGNDDAVRSIDFFCKIISDTILEAIRSDLAKSGINVDGIKDFSVERREDFLKMNKDNKSNKSNTINADENIKESDLIGGSNNEG.

Positions 257–286 are disordered; that stretch reads KDNKSNKSNTINADENIKESDLIGGSNNEG.

Belongs to the universal ribosomal protein uS2 family.

In Ehrlichia ruminantium (strain Gardel), this protein is Small ribosomal subunit protein uS2.